The sequence spans 284 residues: ATP synthase gamma chain (284 aa).

Belongs to the ATPase gamma chain family. As to quaternary structure, F-type ATPases have 2 components, CF(1) - the catalytic core - and CF(0) - the membrane proton channel. CF(1) has five subunits: alpha(3), beta(3), gamma(1), delta(1), epsilon(1). CF(0) has three main subunits: a, b and c.

The protein localises to the cell membrane. Produces ATP from ADP in the presence of a proton gradient across the membrane. The gamma chain is believed to be important in regulating ATPase activity and the flow of protons through the CF(0) complex. The sequence is that of ATP synthase gamma chain from Pelotomaculum thermopropionicum (strain DSM 13744 / JCM 10971 / SI).